The sequence spans 595 residues: NADH-quinone oxidoreductase subunit C/D (595 aa).

Residues 1–186 (MAETDIAMPE…TPYMQDKAKQ (186 aa)) form an NADH dehydrogenase I subunit C region. The NADH dehydrogenase I subunit D stretch occupies residues 210-595 (DFMFLNLGPN…IDVVMADVDR (386 aa)).

This sequence in the N-terminal section; belongs to the complex I 30 kDa subunit family. It in the C-terminal section; belongs to the complex I 49 kDa subunit family. As to quaternary structure, NDH-1 is composed of 13 different subunits. Subunits NuoB, CD, E, F, and G constitute the peripheral sector of the complex.

The protein resides in the cell inner membrane. The catalysed reaction is a quinone + NADH + 5 H(+)(in) = a quinol + NAD(+) + 4 H(+)(out). Its function is as follows. NDH-1 shuttles electrons from NADH, via FMN and iron-sulfur (Fe-S) centers, to quinones in the respiratory chain. The immediate electron acceptor for the enzyme in this species is believed to be ubiquinone. Couples the redox reaction to proton translocation (for every two electrons transferred, four hydrogen ions are translocated across the cytoplasmic membrane), and thus conserves the redox energy in a proton gradient. The sequence is that of NADH-quinone oxidoreductase subunit C/D from Acinetobacter baumannii (strain AYE).